Consider the following 173-residue polypeptide: Probable DNA-directed RNA polymerase subunit delta (173 aa).

An HTH HARE-type domain is found at 14-81 (LSMIELGVKI…GSGMWGLKRW (68 aa)). The tract at residues 86-173 (QAEEEITEEP…EDENDDDNTR (88 aa)) is disordered. Over residues 109–173 (IDDVDDDLDV…EDENDDDNTR (65 aa)) the composition is skewed to acidic residues.

The protein belongs to the RpoE family. RNAP is composed of a core of 2 alpha, a beta and a beta' subunits. The core is associated with a delta subunit and one of several sigma factors.

Functionally, participates in both the initiation and recycling phases of transcription. In the presence of the delta subunit, RNAP displays an increased specificity of transcription, a decreased affinity for nucleic acids, and an increased efficiency of RNA synthesis because of enhanced recycling. This Oceanobacillus iheyensis (strain DSM 14371 / CIP 107618 / JCM 11309 / KCTC 3954 / HTE831) protein is Probable DNA-directed RNA polymerase subunit delta.